Here is a 319-residue protein sequence, read N- to C-terminus: Acetyl-coenzyme A carboxylase carboxyl transferase subunit alpha (319 aa).

Positions 35 to 296 (NIDEEVHRLR…KTQLLADLAD (262 aa)) constitute a CoA carboxyltransferase C-terminal domain.

This sequence belongs to the AccA family. In terms of assembly, acetyl-CoA carboxylase is a heterohexamer composed of biotin carboxyl carrier protein (AccB), biotin carboxylase (AccC) and two subunits each of ACCase subunit alpha (AccA) and ACCase subunit beta (AccD).

Its subcellular location is the cytoplasm. It carries out the reaction N(6)-carboxybiotinyl-L-lysyl-[protein] + acetyl-CoA = N(6)-biotinyl-L-lysyl-[protein] + malonyl-CoA. It participates in lipid metabolism; malonyl-CoA biosynthesis; malonyl-CoA from acetyl-CoA: step 1/1. Functionally, component of the acetyl coenzyme A carboxylase (ACC) complex. First, biotin carboxylase catalyzes the carboxylation of biotin on its carrier protein (BCCP) and then the CO(2) group is transferred by the carboxyltransferase to acetyl-CoA to form malonyl-CoA. The sequence is that of Acetyl-coenzyme A carboxylase carboxyl transferase subunit alpha from Cronobacter sakazakii (strain ATCC BAA-894) (Enterobacter sakazakii).